A 216-amino-acid chain; its full sequence is GTPase IMAP family member GIMD1 (216 aa).

Residues 5 to 216 enclose the AIG1-type G domain; it reads KMIINLAVLG…ENHFQVLSFT (212 aa). Residues 14–22, Ser-35, and 147–149 contribute to the GTP site; these read GKTQSGKSS and HAE.

The protein belongs to the TRAFAC class TrmE-Era-EngA-EngB-Septin-like GTPase superfamily. AIG1/Toc34/Toc159-like paraseptin GTPase family. IAN subfamily.

This Rattus norvegicus (Rat) protein is GTPase IMAP family member GIMD1 (Gimd1).